Here is a 1927-residue protein sequence, read N- to C-terminus: MELSWHVVFIALLSFSCWGSDWESDRNFISTAGPLTNDLLHNLSGLLGDQSSNFVAGDKDMYVCHQPLPTFLPEYFSSLHASQITHYKVFLSWAQLLPAGSTQNPDEKTVQCYRRLLKALKTARLQPMVILHHQTLPASTLRRTEAFADLFADYATFAFHSFGDLVGIWFTFSDLEEVIKELPHQESRASQLQTLSDAHRKAYEIYHESYAFQGGKLSVVLRAEDIPELLLEPPISALAQDTVDFLSLDLSYECQNEASLRQKLSKLQTIEPKVKVFIFNLKLPDCPSTMKNPASLLFSLFEAINKDQVLTIGFDINEFLSCSSSSKKSMSCSLTGSLALQPDQQQDHETTDSSPASAYQRIWEAFANQSRAERDAFLQDTFPEGFLWGASTGAFNVEGGWAEGGRGVSIWDPRRPLNTTEGQATLEVASDSYHKVASDVALLCGLRAQVYKFSISWSRIFPMGHGSSPSLPGVAYYNKLIDRLQDAGIEPMATLFHWDLPQALQDHGGWQNESVVDAFLDYAAFCFSTFGDRVKLWVTFHEPWVMSYAGYGTGQHPPGISDPGVASFKVAHLVLKAHARTWHHYNSHHRPQQQGHVGIVLNSDWAEPLSPERPEDLRASERFLHFMLGWFAHPVFVDGDYPATLRTQIQQMNRQCSHPVAQLPEFTEAEKQLLKGSADFLGLSHYTSRLISNAPQNTCIPSYDTIGGFSQHVNHVWPQTSSSWIRVVPWGIRRLLQFVSLEYTRGKVPIYLAGNGMPIGESENLFDDSLRVDYFNQYINEVLKAIKEDSVDVRSYIARSLIDGFEGPSGYSQRFGLHHVNFSDSSKSRTPRKSAYFFTSIIEKNGFLTKGAKRLLPPNTVNLPSKVRAFTFPSEVPSKAKVVWEKFSSQPKFERDLFYHGTFRDDFLWGVSSSAYQIEGAWDADGKGPSIWDNFTHTPGSNVKDNATGDIACDSYHQLDADLNMLRALKVKAYRFSISWSRIFPTGRNSSINSHGVDYYNRLINGLVASNIFPMVTLFHWDLPQALQDIGGWENPALIDLFDSYADFCFQTFGDRVKFWMTFNEPMYLAWLGYGSGEFPPGVKDPGWAPYRIAHAVIKAHARVYHTYDEKYRQEQKGVISLSLSTHWAEPKSPGVPRDVEAADRMLQFSLGWFAHPIFRNGDYPDTMKWKVGNRSELQHLATSRLPSFTEEEKRFIRATADVFCLNTYYSRIVQHKTPRLNPPSYEDDQEMAEEEDPSWPSTAMNRAAPWGTRRLLNWIKEEYGDIPIYITENGVGLTNPNTEDTDRIFYHKTYINEALKAYRLDGIDLRGYVAWSLMDNFEWLNGYTVKFGLYHVDFNNTNRPRTARASARYYTEVITNNGMPLAREDEFLYGRFPEGFIWSAASAAYQIEGAWRADGKGLSIWDTFSHTPLRVENDAIGDVACDSYHKIAEDLVTLQNLGVSHYRFSISWSRILPDGTTRYINEAGLNYYVRLIDTLLAASIQPQVTIYHWDLPQTLQDVGGWENETIVQRFKEYADVLFQRLGDKVKFWITLNEPFVIAYQGYGYGTAAPGVSNRPGTAPYIVGHNLIKAHAEAWHLYNDVYRASQGGVISITISSDWAEPRDPSNQEDVEAARRYVQFMGGWFAHPIFKNGDYNEVMKTRIRDRSLAAGLNKSRLPEFTESEKRRINGTYDFFGFNHYTTVLAYNLNYATAISSFDADRGVASIADRSWPDSGSFWLKMTPFGFRRILNWLKEEYNDPPIYVTENGVSQREETDLNDTARIYYLRTYINEALKAVQDKVDLRGYTVWSAMDNFEWATGFSERFGLHFVNYSDPSLPRIPKASAKFYASVVRCNGFPDPATGPHACLHQPDAGPTISPVRQEEVQFLGLMLGTTEAQTALYVLFSLVLLGVCGLAFLSYKYCKRSKQGKTQRSQQELSPVSSF.

The N-terminal stretch at 1-19 (MELSWHVVFIALLSFSCWG) is a signal peptide. A propeptide spans 20 to 868 (SDWESDRNFI…NTVNLPSKVR (849 aa)) (XBetaGly). Residues 20-1882 (SDWESDRNFI…LMLGTTEAQT (1863 aa)) lie on the Extracellular side of the membrane. The N-linked (GlcNAc...) asparagine glycan is linked to asparagine 42. The segment at 44 to 286 (SGLLGDQSSN…FIFNLKLPDC (243 aa)) is glycosyl hydrolase-1 1; Region I. The segment at 362–855 (IWEAFANQSR…GFLTKGAKRL (494 aa)) is glycosyl hydrolase-1 2; Region II. Asparagine 368, asparagine 418, asparagine 512, asparagine 821, asparagine 934, asparagine 946, and asparagine 989 each carry an N-linked (GlcNAc...) asparagine glycan. A glycosyl hydrolase-1 3; Region III. Phlorizin hydrolase/glycosylceramidase activity region spans residues 902–1366 (TFRDDFLWGV…EVITNNGMPL (465 aa)). Glutamate 1065 functions as the Proton donor; for phlorizin hydrolase/Glycosylceramidase activity in the catalytic mechanism. The N-linked (GlcNAc...) asparagine glycan is linked to asparagine 1174. The interval 1220–1244 (RLNPPSYEDDQEMAEEEDPSWPSTA) is disordered. Positions 1226 to 1238 (YEDDQEMAEEEDP) are enriched in acidic residues. Catalysis depends on glutamate 1273, which acts as the Nucleophile; for phlorizin hydrolase/Glycosylceramidase activity. 2 N-linked (GlcNAc...) asparagine glycosylation sites follow: asparagine 1340 and asparagine 1508. The tract at residues 1373–1846 (LYGRFPEGFI…CNGFPDPATG (474 aa)) is glycosyl hydrolase-1 4; Region IV. Lactase activity. Glutamate 1538 acts as the Proton donor; for lactase activity in catalysis. The segment at 1647–1927 (RDRSLAAGLN…QQELSPVSSF (281 aa)) is required for homodimerization and transport to the plasma membrane. N-linked (GlcNAc...) asparagine glycosylation is found at asparagine 1656 and asparagine 1672. Glutamate 1749 (nucleophile; for lactase activity) is an active-site residue. Asparagine 1761 and asparagine 1814 each carry an N-linked (GlcNAc...) asparagine glycan. Residues 1883 to 1901 (ALYVLFSLVLLGVCGLAFL) form a helical membrane-spanning segment. The Cytoplasmic segment spans residues 1902-1927 (SYKYCKRSKQGKTQRSQQELSPVSSF).

The protein belongs to the glycosyl hydrolase 1 family. Homodimer. N-glycosylated. As to expression, specifically expressed in small intestine.

It is found in the apical cell membrane. It catalyses the reaction lactose + H2O = beta-D-galactose + D-glucose. The catalysed reaction is phlorizin + H2O = phloretin + beta-D-glucose. The enzyme catalyses D-cellobiose + H2O = beta-D-glucose + D-glucose. It carries out the reaction quercetin 4'-O-beta-D-glucoside + H2O = quercetin + beta-D-glucose. It catalyses the reaction quercetin 3-O-beta-D-glucoside + H2O = quercetin + beta-D-glucose. The catalysed reaction is kaempferol 3-O-beta-D-glucoside + H2O = kaempferol + beta-D-glucose. The enzyme catalyses luteolin 7-O-beta-D-glucoside + H2O = luteolin + beta-D-glucose. It carries out the reaction luteolin 4'-O-beta-D-glucoside + H2O = luteolin + beta-D-glucose. It catalyses the reaction (2S)-naringenin 7-O-beta-D-glucoside + H2O = (2S)-naringenin + beta-D-glucose. The catalysed reaction is eriodictyol-7-O-beta-D-glucoside + H2O = (S)-eriodictyol + beta-D-glucose. The enzyme catalyses apigenin 7-O-beta-D-glucoside + H2O = apigenin + beta-D-glucose. It carries out the reaction daidzein 7-O-beta-D-glucoside + H2O = daidzein + beta-D-glucose + H(+). It catalyses the reaction genistein 7-O-beta-D-glucoside + H2O = genistein + beta-D-glucose. The catalysed reaction is a beta-D-galactosyl-N-acylsphingosine + H2O = a ceramide + beta-D-galactose.. The enzyme catalyses beta-D-glucosyl-(1&lt;-&gt;1')-N-hexadecanoylsphing-4-enine + H2O = N-hexadecanoylsphing-4-enine + beta-D-glucose. It carries out the reaction beta-D-galactosyl-(1&lt;-&gt;1')-N-hexadecanoylsphing-4-enine + H2O = beta-D-galactose + N-hexadecanoylsphing-4-enine. It catalyses the reaction beta-D-galactosyl-(1&lt;-&gt;1')-N-hexadecanoylsphinganine + H2O = N-hexadecanoylsphinganine + beta-D-galactose. The catalysed reaction is beta-D-glucosyl-(1&lt;-&gt;1')-N-hexadecanoylsphinganine + H2O = N-hexadecanoylsphinganine + beta-D-glucose. Its function is as follows. Broad specificity glycosidase of the intestinal brush border membrane that hydrolyzes lactose, the main sugar in mammalian milk, to produce D-glucose and D-galactose. The mature protein is composed of two domains that catalyze the hydrolysis of beta-glucopyranosides and beta-galactopyranosides, with a preference for hydrophilic aglycones (in lactose and cellobiose) for one domain and hydrophobic aglycones (in phlorizin and glycosylceramides) for the other. In Homo sapiens (Human), this protein is Lactase/phlorizin hydrolase.